Consider the following 272-residue polypeptide: Methyl-CpG-binding domain-containing protein 2 (272 aa).

The span at 1–15 shows a compositional bias: polar residues; that stretch reads MSMSQSRAVQRSSSP. Residues 1-24 form a disordered region; the sequence is MSMSQSRAVQRSSSPNEDRGENQL. The CW-type zinc finger occupies 53 to 112; that stretch reads CPSIGAFTVQCASCFKWRLMPSMQKYEEIREQLLENPFFCDTAREWKPDISCDVPADIYQ. Residues 62–104 carry the MBD-associated domain (MAD) motif; the sequence is QCASCFKWRLMPSMQKYEEIREQLLENPFFCDTAREWKPDISC. Cys63, Cys66, Cys92, and Cys104 together coordinate Zn(2+). Residues 118 to 192 form the MBD domain; it reads WAIDKPNISR…SQFSFQIPKP (75 aa). Over residues 236 to 250 the composition is skewed to polar residues; sequence LGTPTESGLNNSHYQ. The interval 236–272 is disordered; sequence LGTPTESGLNNSHYQPSKKKKTSTLSIFGSNDELADR.

Interacts (via MBD domain) with DDM1. In terms of tissue distribution, expressed in buds, flowers, stems, siliques and mature seeds.

Its subcellular location is the nucleus. In terms of biological role, probable transcriptional regulator. The polypeptide is Methyl-CpG-binding domain-containing protein 2 (MBD2) (Arabidopsis thaliana (Mouse-ear cress)).